The chain runs to 679 residues: DNA ligase (679 aa).

NAD(+) contacts are provided by residues 32–36 (DTLYD), 81–82 (SL), and Glu-115. Lys-117 serves as the catalytic N6-AMP-lysine intermediate. Positions 138, 175, 293, and 317 each coordinate NAD(+). Zn(2+) contacts are provided by Cys-411, Cys-414, Cys-429, and Cys-434. Residues 601-679 (NSSGALLGKT…EAELQKLLST (79 aa)) form the BRCT domain.

The protein belongs to the NAD-dependent DNA ligase family. LigA subfamily. Mg(2+) serves as cofactor. The cofactor is Mn(2+).

The enzyme catalyses NAD(+) + (deoxyribonucleotide)n-3'-hydroxyl + 5'-phospho-(deoxyribonucleotide)m = (deoxyribonucleotide)n+m + AMP + beta-nicotinamide D-nucleotide.. DNA ligase that catalyzes the formation of phosphodiester linkages between 5'-phosphoryl and 3'-hydroxyl groups in double-stranded DNA using NAD as a coenzyme and as the energy source for the reaction. It is essential for DNA replication and repair of damaged DNA. This chain is DNA ligase, found in Parasynechococcus marenigrum (strain WH8102).